The chain runs to 151 residues: UPF0735 ACT domain-containing protein SERP1207 (151 aa).

One can recognise an ACT domain in the interval Thr74–Met149.

This sequence belongs to the UPF0735 family.

This is UPF0735 ACT domain-containing protein SERP1207 from Staphylococcus epidermidis (strain ATCC 35984 / DSM 28319 / BCRC 17069 / CCUG 31568 / BM 3577 / RP62A).